A 198-amino-acid polypeptide reads, in one-letter code: MRLSTVLLGSLLGALTQAAPTGQFPGHYQSSPPPLGPSNWERNPVSVFFKVLNTQPDPDYTMLKELVTYDCTYVSLTFDNPTLHSIMPWAGTHTNIGPQAFIDIFTRVGLYWDRGPFTIDYIFGDGGNVTAWGSFTATSRTLGKTVISPWAARARVNEDNRIFYFQWMEDTFTTASSFGSDASNKTYVSNPQGGTTVA.

A signal peptide spans methionine 1 to alanine 18. N-linked (GlcNAc...) asparagine glycosylation is found at asparagine 128 and asparagine 184.

It belongs to the patF family.

Its subcellular location is the cytoplasm. It localises to the cytosol. It carries out the reaction phyllostine = neopatulin. It participates in mycotoxin biosynthesis; patulin biosynthesis. Its function is as follows. Part of the gene cluster that mediates the biosynthesis of patulin, an acetate-derived tetraketide mycotoxin produced by several fungal species that shows antimicrobial properties against several bacteria. PatF catalyzes the conversion of phyllostine into neopatulin. The pathway begins with the synthesis of 6-methylsalicylic acid by the polyketide synthase (PKS) patK via condensation of acetate and malonate units. The 6-methylsalicylic acid decarboxylase patG then catalyzes the decarboxylation of 6-methylsalicylic acid to yield m-cresol (also known as 3-methylphenol). These first reactions occur in the cytosol. The intermediate m-cresol is then transported into the endoplasmic reticulum where the cytochrome P450 monooxygenase patH converts it to m-hydroxybenzyl alcohol, which is further converted to gentisyl alcohol by the cytochrome P450 monooxygenase patI. The oxidoreductases patJ and patO further convert gentisyl alcohol to isoepoxydon in the vacuole. PatN catalyzes then the transformation of isoepoxydon into phyllostine. The cluster protein patF is responsible for the conversion from phyllostine to neopatulin whereas the alcohol dehydrogenase patD converts neopatulin to E-ascladiol. The steps between isoepoxydon and E-ascladiol occur in the cytosol, and E-ascladiol is probably secreted to the extracellular space by one of the cluster-specific transporters patC or patM. Finally, the secreted patulin synthase patE catalyzes the conversion of E-ascladiol to patulin. This chain is Patulin synthesis protein F, found in Aspergillus clavatus (strain ATCC 1007 / CBS 513.65 / DSM 816 / NCTC 3887 / NRRL 1 / QM 1276 / 107).